Here is a 341-residue protein sequence, read N- to C-terminus: HTH-type transcriptional repressor PurR (341 aa).

The HTH lacI-type domain maps to 2 to 56 (ATIKDVAKRAGVSTTTVSHVINKTRFVAEETKAAVRAAIKELHYSPSAVARSLKV). Positions 4 to 23 (IKDVAKRAGVSTTTVSHVIN) form a DNA-binding region, H-T-H motif. A DNA-binding region spans residues 48–56 (SAVARSLKV). Hypoxanthine contacts are provided by tyrosine 73, arginine 190, threonine 192, phenylalanine 221, and aspartate 275.

As to quaternary structure, homodimer.

Its pathway is purine metabolism; purine nucleotide biosynthesis [regulation]. Its function is as follows. Is the main repressor of the genes involved in the de novo synthesis of purine nucleotides, regulating purB, purC, purEK, purF, purHD, purL, purMN and guaBA expression. PurR is allosterically activated to bind its cognate DNA by binding the purine corepressors, hypoxanthine or guanine, thereby effecting transcription repression. This chain is HTH-type transcriptional repressor PurR, found in Pectobacterium carotovorum subsp. carotovorum (strain PC1).